The primary structure comprises 162 residues: NADH-quinone oxidoreductase subunit I (162 aa).

2 consecutive 4Fe-4S ferredoxin-type domains span residues 53 to 83 (LRRY…IEAE) and 93 to 122 (TRYD…EGPN). 8 residues coordinate [4Fe-4S] cluster: C63, C66, C69, C73, C102, C105, C108, and C112.

This sequence belongs to the complex I 23 kDa subunit family. NDH-1 is composed of 14 different subunits. Subunits NuoA, H, J, K, L, M, N constitute the membrane sector of the complex. [4Fe-4S] cluster is required as a cofactor.

It is found in the cell inner membrane. The catalysed reaction is a quinone + NADH + 5 H(+)(in) = a quinol + NAD(+) + 4 H(+)(out). Functionally, NDH-1 shuttles electrons from NADH, via FMN and iron-sulfur (Fe-S) centers, to quinones in the respiratory chain. The immediate electron acceptor for the enzyme in this species is believed to be ubiquinone. Couples the redox reaction to proton translocation (for every two electrons transferred, four hydrogen ions are translocated across the cytoplasmic membrane), and thus conserves the redox energy in a proton gradient. This chain is NADH-quinone oxidoreductase subunit I, found in Sphingopyxis alaskensis (strain DSM 13593 / LMG 18877 / RB2256) (Sphingomonas alaskensis).